The following is a 187-amino-acid chain: MKIMGILGIQGDLEEHEDAVRKVNCIPKRIRTVDDLDGIDALIIPGGESTTIGKLMVSYGFIDKIRNLKIPILGTCAGMVLLSKGTGKEQPLLEMLNVTIKRNAYGSQKDSFEKEIVLGGKKVHAVFIRAPQVGEILSKDVEIISKDDGNIVGVKEGNIMAISFHPELSEDGVIVYEYFLKNFVEKN.

L-glutamine is bound at residue 47 to 49 (GES). Cys-76 acts as the Nucleophile in catalysis. Residues Arg-102 and 128–129 (IR) contribute to the L-glutamine site. Residues His-165 and Glu-167 each act as charge relay system in the active site.

The protein belongs to the glutaminase PdxT/SNO family. In the presence of PdxS, forms a dodecamer of heterodimers. Only shows activity in the heterodimer.

It catalyses the reaction aldehydo-D-ribose 5-phosphate + D-glyceraldehyde 3-phosphate + L-glutamine = pyridoxal 5'-phosphate + L-glutamate + phosphate + 3 H2O + H(+). The enzyme catalyses L-glutamine + H2O = L-glutamate + NH4(+). The protein operates within cofactor biosynthesis; pyridoxal 5'-phosphate biosynthesis. Catalyzes the hydrolysis of glutamine to glutamate and ammonia as part of the biosynthesis of pyridoxal 5'-phosphate. The resulting ammonia molecule is channeled to the active site of PdxS. The chain is Pyridoxal 5'-phosphate synthase subunit PdxT from Methanococcus maripaludis (strain C7 / ATCC BAA-1331).